A 100-amino-acid polypeptide reads, in one-letter code: NADH-quinone oxidoreductase subunit K (100 aa).

3 helical membrane-spanning segments follow: residues 4–24 (TTWV…GLLS), 28–48 (LLFI…LFIA), and 60–80 (IMYL…LALV).

It belongs to the complex I subunit 4L family. NDH-1 is composed of 13 different subunits. Subunits NuoA, H, J, K, L, M, N constitute the membrane sector of the complex.

It is found in the cell inner membrane. The catalysed reaction is a quinone + NADH + 5 H(+)(in) = a quinol + NAD(+) + 4 H(+)(out). In terms of biological role, NDH-1 shuttles electrons from NADH, via FMN and iron-sulfur (Fe-S) centers, to quinones in the respiratory chain. The immediate electron acceptor for the enzyme in this species is believed to be ubiquinone. Couples the redox reaction to proton translocation (for every two electrons transferred, four hydrogen ions are translocated across the cytoplasmic membrane), and thus conserves the redox energy in a proton gradient. This Shewanella woodyi (strain ATCC 51908 / MS32) protein is NADH-quinone oxidoreductase subunit K.